The chain runs to 750 residues: Cation-transporting P-type ATPase B (750 aa).

Residues 17–80 (RRIQLDVAGM…VIEQAGYRAT (64 aa)) enclose the HMA domain. Positions 28 and 31 each coordinate a metal cation. The next 6 helical transmembrane spans lie at 104–124 (LIVA…FAIV), 129–149 (FPGW…WAAW), 167–187 (ETLI…TIFV), 200–220 (AILH…VFVL), 360–380 (IAAV…ASWL), and 389–409 (AFSV…GLAT). The active-site 4-aspartylphosphate intermediate is the Asp-445. 6 consecutive transmembrane segments (helical) span residues 471–491 (VLAL…TAIV), 500–520 (VADF…EHHV), 547–567 (SRGE…AVAI), 663–683 (VAIG…VPVA), 693–713 (TIRI…PIAS), and 715–735 (GLLN…FVVS).

Belongs to the cation transport ATPase (P-type) (TC 3.A.3) family. Type IB subfamily.

The protein resides in the cell membrane. It carries out the reaction ATP + H2O = ADP + phosphate + H(+). The protein is Cation-transporting P-type ATPase B (ctpB) of Mycobacterium leprae (strain TN).